Consider the following 366-residue polypeptide: Protein lifeguard 1 (366 aa).

The segment at methionine 1 to aspartate 141 is disordered. 2 stretches are compositionally biased toward pro residues: residues tyrosine 14–proline 44 and glycine 67–tyrosine 109. The next 7 membrane-spanning stretches (helical) occupy residues valine 160–phenylalanine 180, valine 192–cysteine 212, leucine 223–phenylalanine 243, alanine 248–methionine 268, valine 278–isoleucine 298, valine 302–aspartate 322, and phenylalanine 341–isoleucine 361.

Belongs to the BI1 family. LFG subfamily.

The protein resides in the membrane. In terms of biological role, potential apoptotic regulator. The polypeptide is Protein lifeguard 1 (GRINA) (Bos taurus (Bovine)).